A 149-amino-acid polypeptide reads, in one-letter code: Glutamate mutase sigma subunit (149 aa).

Positions 3–140 constitute a B12-binding domain; sequence KATLVIGVIG…AHDINQRHDV (138 aa). Residues 13-17, His-16, 61-63, and 93-97 each bind adenosylcob(III)alamin; these read ADCHA, SSI, and NLVVG.

This sequence belongs to the methylaspartate mutase GlmS subunit family. Heterotetramer composed of 2 epsilon subunits (GlmE) and 2 sigma subunits (GlmS). GlmE exists as a homodimer and GlmS as a monomer. The cofactor is adenosylcob(III)alamin.

It catalyses the reaction (2S,3S)-3-methyl-L-aspartate = L-glutamate. The protein operates within amino-acid degradation; L-glutamate degradation via mesaconate pathway; acetate and pyruvate from L-glutamate: step 1/4. Catalyzes the carbon skeleton rearrangement of L-glutamate to L-threo-3-methylaspartate ((2S,3S)-3-methylaspartate). This chain is Glutamate mutase sigma subunit, found in Escherichia coli O157:H7.